A 264-amino-acid chain; its full sequence is TLC domain-containing protein 2 (264 aa).

A run of 6 helical transmembrane segments spans residues 3–23 (PTGL…HWGL), 42–62 (LCVS…GLSL), 77–97 (WALV…ADLL), 114–134 (VVVS…FSMV), 169–189 (SLAT…LWLF), and 199–219 (LVTL…ILGI). The TLC domain maps to 34-227 (RDRWQWWNLC…GIRILVNDVL (194 aa)). The segment at 230-264 (RPHPPSPGHEKTRGTRTRRDNGPVTSNSSTLSLKD) is disordered. The segment covering 237 to 250 (GHEKTRGTRTRRDN) has biased composition (basic and acidic residues). The span at 252-264 (PVTSNSSTLSLKD) shows a compositional bias: polar residues.

It belongs to the TLCD family.

The protein resides in the cell membrane. In terms of biological role, regulates the composition and fluidity of the plasma membrane. Inhibits the incorporation of membrane-fluidizing phospholipids containing omega-3 long-chain polyunsaturated fatty acids (LCPUFA) and thereby promotes membrane rigidity. Does not appear to have any effect on LCPUFA synthesis. This is TLC domain-containing protein 2 (TLCD2) from Homo sapiens (Human).